The following is a 1172-amino-acid chain: Laminin subunit beta-3 (1172 aa).

An N-terminal signal peptide occupies residues 1 to 17 (MRPFFLLCFALPGLLHA). The Laminin N-terminal domain maps to 22–249 (SRGACYPPVG…AVSQLRLQGS (228 aa)). Asparagine 220 is a glycosylation site (N-linked (GlcNAc...) asparagine). 24 disulfide bridges follow: cysteine 250–cysteine 259, cysteine 252–cysteine 279, cysteine 281–cysteine 290, cysteine 293–cysteine 313, cysteine 316–cysteine 325, cysteine 318–cysteine 343, cysteine 346–cysteine 355, cysteine 358–cysteine 376, cysteine 379–cysteine 392, cysteine 381–cysteine 399, cysteine 401–cysteine 410, cysteine 413–cysteine 428, cysteine 431–cysteine 444, cysteine 433–cysteine 451, cysteine 453–cysteine 462, cysteine 465–cysteine 478, cysteine 481–cysteine 493, cysteine 483–cysteine 500, cysteine 502–cysteine 511, cysteine 519–cysteine 531, cysteine 534–cysteine 546, cysteine 536–cysteine 553, cysteine 555–cysteine 564, and cysteine 567–cysteine 578. 6 consecutive Laminin EGF-like domains span residues 250 to 315 (CFCH…ECQR), 316 to 378 (CDCN…TCIS), 379 to 430 (CECD…GCHR), 431 to 480 (CDCN…GCEP), 481 to 533 (CACD…GCRA), and 534 to 580 (CDCD…VCVA). The interval 579-785 (VACHPCFQTY…SLPDLTPTFN (207 aa)) is domain II. An N-linked (GlcNAc...) asparagine glycan is attached at asparagine 604. A coiled-coil region spans residues 723 to 757 (EQSAQAAQQVSDSSRLLDQLRDSRREAERLVRQAG). Positions 786-816 (KLCGNSRQMACTPISCPGELCPQDNGTACGS) are domain alpha. The N-linked (GlcNAc...) asparagine glycan is linked to asparagine 810. The segment at 817–1170 (RCRGVLPRAG…INGRVLYYAT (354 aa)) is domain I. 2 coiled-coil regions span residues 831-884 (MAGQ…MEED) and 948-1133 (VLSQ…ELEL).

Laminin is a complex glycoprotein, consisting of three different polypeptide chains (alpha, beta, gamma), which are bound to each other by disulfide bonds into a cross-shaped molecule comprising one long and three short arms with globules at each end. Beta-3 is a subunit of laminin-5 (laminin-332 or epiligrin/kalinin/nicein). Interacts with ECM1. Found in the basement membranes (major component).

It is found in the secreted. The protein localises to the extracellular space. The protein resides in the extracellular matrix. It localises to the basement membrane. In terms of biological role, binding to cells via a high affinity receptor, laminin is thought to mediate the attachment, migration and organization of cells into tissues during embryonic development by interacting with other extracellular matrix components. The polypeptide is Laminin subunit beta-3 (LAMB3) (Homo sapiens (Human)).